The sequence spans 83 residues: Cytochrome b559 subunit alpha (83 aa).

A helical membrane pass occupies residues 21–35 (VIHSITIPSLFIAGW). Histidine 23 is a binding site for heme.

Belongs to the PsbE/PsbF family. Heterodimer of an alpha subunit and a beta subunit. PSII is composed of 1 copy each of membrane proteins PsbA, PsbB, PsbC, PsbD, PsbE, PsbF, PsbH, PsbI, PsbJ, PsbK, PsbL, PsbM, PsbT, PsbX, PsbY, PsbZ, Psb30/Ycf12, at least 3 peripheral proteins of the oxygen-evolving complex and a large number of cofactors. It forms dimeric complexes. Heme b is required as a cofactor.

It is found in the plastid. The protein localises to the chloroplast thylakoid membrane. This b-type cytochrome is tightly associated with the reaction center of photosystem II (PSII). PSII is a light-driven water:plastoquinone oxidoreductase that uses light energy to abstract electrons from H(2)O, generating O(2) and a proton gradient subsequently used for ATP formation. It consists of a core antenna complex that captures photons, and an electron transfer chain that converts photonic excitation into a charge separation. This is Cytochrome b559 subunit alpha from Psilotum nudum (Whisk fern).